Consider the following 417-residue polypeptide: Serine--tRNA ligase (417 aa).

232 to 234 serves as a coordination point for L-serine; the sequence is TAE. Residue 263–265 participates in ATP binding; it reads RKE. L-serine is bound at residue glutamate 286. 350–353 is an ATP binding site; sequence EISS. Serine 385 is an L-serine binding site.

This sequence belongs to the class-II aminoacyl-tRNA synthetase family. Type-1 seryl-tRNA synthetase subfamily. As to quaternary structure, homodimer. The tRNA molecule binds across the dimer.

The protein resides in the cytoplasm. The catalysed reaction is tRNA(Ser) + L-serine + ATP = L-seryl-tRNA(Ser) + AMP + diphosphate + H(+). It carries out the reaction tRNA(Sec) + L-serine + ATP = L-seryl-tRNA(Sec) + AMP + diphosphate + H(+). Its pathway is aminoacyl-tRNA biosynthesis; selenocysteinyl-tRNA(Sec) biosynthesis; L-seryl-tRNA(Sec) from L-serine and tRNA(Sec): step 1/1. Catalyzes the attachment of serine to tRNA(Ser). Is also able to aminoacylate tRNA(Sec) with serine, to form the misacylated tRNA L-seryl-tRNA(Sec), which will be further converted into selenocysteinyl-tRNA(Sec). This is Serine--tRNA ligase from Sulfurihydrogenibium sp. (strain YO3AOP1).